Reading from the N-terminus, the 395-residue chain is Chorismate synthase (395 aa).

Residue Arg-48 participates in NADP(+) binding. 125–127 (RSS) contacts FMN. The disordered stretch occupies residues 264-292 (RNEDWTFDDGESFDHVESEEGDPVPVGND). FMN is bound by residues Gly-298, 313–317 (HAPTS), and Arg-340. The segment at 373 to 395 (PDRVDGNPGQYDTDYHPSSPDND) is disordered.

The protein belongs to the chorismate synthase family. It depends on FMNH2 as a cofactor.

It catalyses the reaction 5-O-(1-carboxyvinyl)-3-phosphoshikimate = chorismate + phosphate. Its pathway is metabolic intermediate biosynthesis; chorismate biosynthesis; chorismate from D-erythrose 4-phosphate and phosphoenolpyruvate: step 7/7. Its function is as follows. Catalyzes the anti-1,4-elimination of the C-3 phosphate and the C-6 proR hydrogen from 5-enolpyruvylshikimate-3-phosphate (EPSP) to yield chorismate, which is the branch point compound that serves as the starting substrate for the three terminal pathways of aromatic amino acid biosynthesis. This reaction introduces a second double bond into the aromatic ring system. This chain is Chorismate synthase, found in Halorubrum lacusprofundi (strain ATCC 49239 / DSM 5036 / JCM 8891 / ACAM 34).